A 987-amino-acid polypeptide reads, in one-letter code: Pentatricopeptide repeat-containing protein At1g06710, mitochondrial (987 aa).

The transit peptide at 1 to 42 (MNKTVVRCLLSRSHHPLIHFSTNLSLLHRVFTCSRYLTARFM) directs the protein to the mitochondrion. 22 PPR repeats span residues 164–198 (TAPVYNALVDLIVRDDDEKVPEEFLQQIRDDDKEV), 199–233 (FGEFLNVLVRKHCRNGSFSIALEELGRLKDFRFRP), 234–268 (SRSTYNCLIQAFLKADRLDSASLIHREMSLANLRM), 269–299 (DGFTLRCFAYSLCKVGKWREALTLVETENFV), 301–335 (DTVFYTKLISGLCEASLFEEAMDFLNRMRATSCLP), 336–370 (NVVTYSTLLCGCLNKKQLGRCKRVLNMMMMEGCYP), 371–405 (SPKIFNSLVHAYCTSGDHSYAYKLLKKMVKCGHMP), 406–446 (GYVV…GVVL), 447–481 (NKINVSSFTRCLCSAGKYEKAFSVIREMIGQGFIP), 482–516 (DTSTYSKVLNYLCNASKMELAFLLFEEMKRGGLVA), 517–551 (DVYTYTIMVDSFCKAGLIEQARKWFNEMREVGCTP), 552–586 (NVVTYTALIHAYLKAKKVSYANELFETMLSEGCLP), 587–621 (NIVTYSALIDGHCKAGQVEKACQIFERMCGSKDVP), 638–672 (NVVTYGALLDGFCKSHRVEEARKLLDAMSMEGCEP), 673–707 (NQIVYDALIDGLCKVGKLDEAQEVKTEMSEHGFPA), 708–742 (TLYTYSSLIDRYFKVKRQDLASKVLSKMLENSCAP), 743–777 (NVVIYTEMIDGLCKVGKTDEAYKLMQMMEEKGCQP), 778–812 (NVVTYTAMIDGFGMIGKIETCLELLERMGSKGVAP), 813–847 (NYVTYRVLIDHCCKNGALDVAHNLLEEMKQTHWPT), 881–915 (FLSVYRLLIDNLIKAQRLEMALRLLEEVATFSATL), 918–952 (YSSTYNSLIESLCLANKVETAFQLFSEMTKKGVIP), and 953–987 (EMQSFCSLIKGLFRNSKISEALLLLDFISHMVCPL).

This sequence belongs to the PPR family. P subfamily.

It localises to the mitochondrion. The sequence is that of Pentatricopeptide repeat-containing protein At1g06710, mitochondrial from Arabidopsis thaliana (Mouse-ear cress).